Consider the following 120-residue polypeptide: Lysozyme (120 aa).

Residues 1-120 enclose the C-type lysozyme domain; that stretch reads KRFTRCGLVN…NHSNPDISSC (120 aa). 4 disulfides stabilise this stretch: Cys-6–Cys-120, Cys-27–Cys-110, Cys-62–Cys-76, and Cys-72–Cys-90. Residues Glu-32 and Asp-50 contribute to the active site.

This sequence belongs to the glycosyl hydrolase 22 family. Monomer.

It carries out the reaction Hydrolysis of (1-&gt;4)-beta-linkages between N-acetylmuramic acid and N-acetyl-D-glucosamine residues in a peptidoglycan and between N-acetyl-D-glucosamine residues in chitodextrins.. In terms of biological role, lysozymes have primarily a bacteriolytic function; those in tissues and body fluids are associated with the monocyte-macrophage system and enhance the activity of immunoagents. This is Lysozyme from Antheraea mylitta (Tasar silkworm).